The following is a 397-amino-acid chain: 1-deoxy-D-xylulose 5-phosphate reductoisomerase (397 aa).

NADPH contacts are provided by Thr-17, Gly-18, Ser-19, Ile-20, Ala-45, Asn-47, and Asn-130. Lys-131 provides a ligand contact to 1-deoxy-D-xylulose 5-phosphate. Glu-132 contributes to the NADPH binding site. Asp-156 serves as a coordination point for Mn(2+). 4 residues coordinate 1-deoxy-D-xylulose 5-phosphate: Ser-157, Glu-158, Ser-182, and His-205. Residue Glu-158 coordinates Mn(2+). Residue Gly-211 coordinates NADPH. Ser-218, Asn-223, Lys-224, and Glu-227 together coordinate 1-deoxy-D-xylulose 5-phosphate. Glu-227 is a binding site for Mn(2+).

The protein belongs to the DXR family. The cofactor is Mg(2+). Mn(2+) is required as a cofactor.

It catalyses the reaction 2-C-methyl-D-erythritol 4-phosphate + NADP(+) = 1-deoxy-D-xylulose 5-phosphate + NADPH + H(+). It participates in isoprenoid biosynthesis; isopentenyl diphosphate biosynthesis via DXP pathway; isopentenyl diphosphate from 1-deoxy-D-xylulose 5-phosphate: step 1/6. Catalyzes the NADPH-dependent rearrangement and reduction of 1-deoxy-D-xylulose-5-phosphate (DXP) to 2-C-methyl-D-erythritol 4-phosphate (MEP). The sequence is that of 1-deoxy-D-xylulose 5-phosphate reductoisomerase from Agrobacterium fabrum (strain C58 / ATCC 33970) (Agrobacterium tumefaciens (strain C58)).